The chain runs to 189 residues: Ras-like protein 1 (189 aa).

GTP is bound at residue 10 to 17; it reads GAGGVGKS. Residues 32–40 carry the Effector region motif; sequence YDPTIEDSY. Residues 57 to 61 and 116 to 119 contribute to the GTP site; these read DTAGQ and NKCD. Position 186 is a cysteine methyl ester (Cys186). The S-geranylgeranyl cysteine moiety is linked to residue Cys186. The propeptide at 187–189 is removed in mature form; the sequence is KML.

This sequence belongs to the small GTPase superfamily. Ras family.

It localises to the cell membrane. The catalysed reaction is GTP + H2O = GDP + phosphate + H(+). With respect to regulation, alternates between an inactive form bound to GDP and an active form bound to GTP. Activated by a guanine nucleotide-exchange factor (GEF) and inactivated by a GTPase-activating protein (GAP). Functionally, ras proteins bind GDP/GTP and possess intrinsic GTPase activity. Plays a role in eye development by regulating cell growth, survival of postmitotic ommatidial cells and differentiation of photoreceptor cells. During larval development, mediates Ptth/tor signaling leading to the production of ecdysone, a hormone required for the initiation of metamorphosis. In Drosophila virilis (Fruit fly), this protein is Ras-like protein 1.